A 215-amino-acid polypeptide reads, in one-letter code: Cytochrome b6 (215 aa).

A helical transmembrane segment spans residues 32–52; the sequence is IFYCFGGIVFTCFLVQVATGF. A heme c-binding site is contributed by Cys35. Residues His86 and His100 each contribute to the heme b site. A run of 3 helical transmembrane segments spans residues 90–110, 116–136, and 186–206; these read ASMMVMMMVLHVFRVYLTGGF, LTWVTGVILAVVTVSFGVTGY, and AHTFVLPLAAAVLMLTHFLMI. Positions 187 and 202 each coordinate heme b.

This sequence belongs to the cytochrome b family. PetB subfamily. In terms of assembly, the 4 large subunits of the cytochrome b6-f complex are cytochrome b6, subunit IV (17 kDa polypeptide, PetD), cytochrome f and the Rieske protein, while the 4 small subunits are PetG, PetL, PetM and PetN. The complex functions as a dimer. Requires heme b as cofactor. Heme c is required as a cofactor.

The protein localises to the plastid. It localises to the chloroplast thylakoid membrane. In terms of biological role, component of the cytochrome b6-f complex, which mediates electron transfer between photosystem II (PSII) and photosystem I (PSI), cyclic electron flow around PSI, and state transitions. This chain is Cytochrome b6, found in Trieres chinensis (Marine centric diatom).